Consider the following 702-residue polypeptide: Polyribonucleotide nucleotidyltransferase (702 aa).

Residues Asp485 and Asp491 each contribute to the Mg(2+) site. The 60-residue stretch at 552 to 611 folds into the KH domain; it reads PKTSTLQIDPEKIRDVIGAGGKVINKIIADTGVKIDIKEDGLVYVSSAESEGVKEAVKII. The region spanning 621–689 is the S1 motif domain; that stretch reads GEIYLGKVTK…SQGRINLSRK (69 aa).

The protein belongs to the polyribonucleotide nucleotidyltransferase family. Mg(2+) serves as cofactor.

The protein localises to the cytoplasm. It carries out the reaction RNA(n+1) + phosphate = RNA(n) + a ribonucleoside 5'-diphosphate. Its function is as follows. Involved in mRNA degradation. Catalyzes the phosphorolysis of single-stranded polyribonucleotides processively in the 3'- to 5'-direction. The sequence is that of Polyribonucleotide nucleotidyltransferase from Clostridium perfringens (strain ATCC 13124 / DSM 756 / JCM 1290 / NCIMB 6125 / NCTC 8237 / Type A).